The primary structure comprises 488 residues: Erythromycin resistance ATP-binding protein MsrA (488 aa).

The ABC transporter 1 domain maps to 6 to 199 (IKFNQINHKL…NQYEQEQLEQ (194 aa)). 38 to 45 (GGNGTGKT) lines the ATP pocket. Residues 200-298 (QRKYEQYISE…KIYDIHNNYP (99 aa)) are Q-linker, rich in Glu and hydrophilic AA. A disordered region spans residues 211 to 255 (QRLSQASKAKRNQAQQMAQASSKQKNKSIAPDRLSASKEKGTVEK). A compositionally biased stretch (low complexity) spans 222–233 (NQAQQMAQASSK). The segment covering 245–255 (SASKEKGTVEK) has biased composition (basic and acidic residues). Residues 299–487 (IIAQNLTLVK…ELTGQSIHDI (189 aa)) form the ABC transporter 2 domain. Residue 331–338 (GANGVGKT) coordinates ATP.

The protein belongs to the ABC transporter superfamily.

Confers resistance to 14-membered ring macrolides (like erythromycin) and to B streptogramins, by acting as an ATP-dependent efflux pump. This Staphylococcus epidermidis protein is Erythromycin resistance ATP-binding protein MsrA (msrA).